The following is a 573-amino-acid chain: Methionine--tRNA ligase (573 aa).

The 'HIGH' region motif lies at 10–20; sequence PYVNSVPHLGN. Zn(2+)-binding residues include C143, C146, C156, and C159. Residues 333–337 carry the 'KMSKS' region motif; the sequence is KFSKS. K336 is an ATP binding site.

It belongs to the class-I aminoacyl-tRNA synthetase family. MetG type 1 subfamily. The cofactor is Zn(2+).

Its subcellular location is the cytoplasm. It carries out the reaction tRNA(Met) + L-methionine + ATP = L-methionyl-tRNA(Met) + AMP + diphosphate. Its function is as follows. Is required not only for elongation of protein synthesis but also for the initiation of all mRNA translation through initiator tRNA(fMet) aminoacylation. This is Methionine--tRNA ligase from Saccharolobus islandicus (strain M.14.25 / Kamchatka #1) (Sulfolobus islandicus).